Reading from the N-terminus, the 120-residue chain is NAD(P)H-quinone oxidoreductase subunit 3, chloroplastic (120 aa).

The next 3 membrane-spanning stretches (helical) occupy residues 9 to 29, 64 to 84, and 88 to 108; these read IFWA…LISG, MFAL…PWAM, and VLGV…IVGS.

This sequence belongs to the complex I subunit 3 family. In terms of assembly, NDH is composed of at least 16 different subunits, 5 of which are encoded in the nucleus.

The protein resides in the plastid. It is found in the chloroplast thylakoid membrane. The enzyme catalyses a plastoquinone + NADH + (n+1) H(+)(in) = a plastoquinol + NAD(+) + n H(+)(out). It carries out the reaction a plastoquinone + NADPH + (n+1) H(+)(in) = a plastoquinol + NADP(+) + n H(+)(out). Its function is as follows. NDH shuttles electrons from NAD(P)H:plastoquinone, via FMN and iron-sulfur (Fe-S) centers, to quinones in the photosynthetic chain and possibly in a chloroplast respiratory chain. The immediate electron acceptor for the enzyme in this species is believed to be plastoquinone. Couples the redox reaction to proton translocation, and thus conserves the redox energy in a proton gradient. The sequence is that of NAD(P)H-quinone oxidoreductase subunit 3, chloroplastic from Buxus microphylla (Littleleaf boxwood).